Here is a 247-residue protein sequence, read N- to C-terminus: Ribonuclease 3 (247 aa).

The RNase III domain maps to 21-149 (VDHQPLLDHL…LFGAIFRQHG (129 aa)). Mg(2+) is bound at residue Glu62. Asp66 is an active-site residue. Mg(2+) contacts are provided by Asp135 and Glu138. Glu138 is a catalytic residue. In terms of domain architecture, DRBM spans 176–244 (DWKTTLQEEL…AHQAFRKLRE (69 aa)).

This sequence belongs to the ribonuclease III family. In terms of assembly, homodimer. Requires Mg(2+) as cofactor.

It localises to the cytoplasm. It carries out the reaction Endonucleolytic cleavage to 5'-phosphomonoester.. Functionally, digests double-stranded RNA. Involved in the processing of primary rRNA transcript to yield the immediate precursors to the large and small rRNAs (23S and 16S). Processes some mRNAs, and tRNAs when they are encoded in the rRNA operon. Processes pre-crRNA and tracrRNA of type II CRISPR loci if present in the organism. This chain is Ribonuclease 3, found in Corynebacterium glutamicum (strain ATCC 13032 / DSM 20300 / JCM 1318 / BCRC 11384 / CCUG 27702 / LMG 3730 / NBRC 12168 / NCIMB 10025 / NRRL B-2784 / 534).